The following is a 48-amino-acid chain: GTCKCDDDGPDVRTATFTGSTEFANCNESWEKCLAVYTPVASCCRKKK.

Cystine bridges form between C3–C43, C5–C33, and C26–C44.

Belongs to the sea anemone sodium channel inhibitory toxin family. Type II subfamily.

The protein resides in the secreted. It is found in the nematocyst. Binds to site 3 of voltage-gated sodium channels and inhibits the inactivation process. The protein is Delta-stichotoxin-Hcr1b of Radianthus crispa (Leathery sea anemone).